A 160-amino-acid chain; its full sequence is Protein MGF 300-2R (160 aa).

The protein belongs to the asfivirus MGF 300 family.

In terms of biological role, plays a role in virus cell tropism, and may be required for efficient virus replication in macrophages. The chain is Protein MGF 300-2R from African swine fever virus (isolate Tick/Malawi/Lil 20-1/1983) (ASFV).